Consider the following 460-residue polypeptide: MSNYAIILAAGKGTRMKSDLPKVLHKVSGITMLEHVFRAVSVIEPAKNVTVIGHKAELVREVLDGQSAFTMQTEQLGTGHAVMMAEEELAGLEGQTLVIAGDTPLITGESLKNLIDFHVNHKNVATILTATADNPFGYGRIIRNENGEVTKIVEQKDANKFEQQVKEINTGTYVFDNKRLFEALKNINTNNAQGEYYLTDVISIFRENGEKVGAYTLRDFEESLGVNDRVALATAEDVMRRRINKTHMINGVTFQNPNATYIDVDVEIAPDVVIEANVTLKGKTKVGAESVLTNGTYIVDSTIGANTVITNSMIEHSVVEKGATVGPFAHIRPDSMLKEGVHIGNFVEVKGSTIGENTKAGHLTYIGNAEVGSDVNFGAGTITVNYDGQHKFKTQIANNAFIGSNSTLIAPLEIGDNALTAAGSTITDNVPADSVAIGRSRQVNKEGYAIKKPHHPSQQK.

Residues 1 to 229 (MSNYAIILAA…FEESLGVNDR (229 aa)) are pyrophosphorylase. UDP-N-acetyl-alpha-D-glucosamine contacts are provided by residues 8-11 (LAAG), Lys22, Gln72, and 77-78 (GT). Asp102 contacts Mg(2+). Positions 139, 154, 169, and 227 each coordinate UDP-N-acetyl-alpha-D-glucosamine. Asn227 is a binding site for Mg(2+). Positions 230-250 (VALATAEDVMRRRINKTHMIN) are linker. The N-acetyltransferase stretch occupies residues 251–460 (GVTFQNPNAT…KKPHHPSQQK (210 aa)). Residues Arg332 and Lys350 each coordinate UDP-N-acetyl-alpha-D-glucosamine. The Proton acceptor role is filled by His362. Residues Tyr365 and Asn376 each contribute to the UDP-N-acetyl-alpha-D-glucosamine site. Acetyl-CoA-binding positions include Ala379, 385 to 386 (NY), Ser404, Ala422, and Arg439.

In the N-terminal section; belongs to the N-acetylglucosamine-1-phosphate uridyltransferase family. This sequence in the C-terminal section; belongs to the transferase hexapeptide repeat family. As to quaternary structure, homotrimer. The cofactor is Mg(2+).

The protein resides in the cytoplasm. The catalysed reaction is alpha-D-glucosamine 1-phosphate + acetyl-CoA = N-acetyl-alpha-D-glucosamine 1-phosphate + CoA + H(+). The enzyme catalyses N-acetyl-alpha-D-glucosamine 1-phosphate + UTP + H(+) = UDP-N-acetyl-alpha-D-glucosamine + diphosphate. The protein operates within nucleotide-sugar biosynthesis; UDP-N-acetyl-alpha-D-glucosamine biosynthesis; N-acetyl-alpha-D-glucosamine 1-phosphate from alpha-D-glucosamine 6-phosphate (route II): step 2/2. Its pathway is nucleotide-sugar biosynthesis; UDP-N-acetyl-alpha-D-glucosamine biosynthesis; UDP-N-acetyl-alpha-D-glucosamine from N-acetyl-alpha-D-glucosamine 1-phosphate: step 1/1. It functions in the pathway bacterial outer membrane biogenesis; LPS lipid A biosynthesis. Its function is as follows. Catalyzes the last two sequential reactions in the de novo biosynthetic pathway for UDP-N-acetylglucosamine (UDP-GlcNAc). The C-terminal domain catalyzes the transfer of acetyl group from acetyl coenzyme A to glucosamine-1-phosphate (GlcN-1-P) to produce N-acetylglucosamine-1-phosphate (GlcNAc-1-P), which is converted into UDP-GlcNAc by the transfer of uridine 5-monophosphate (from uridine 5-triphosphate), a reaction catalyzed by the N-terminal domain. The sequence is that of Bifunctional protein GlmU from Streptococcus thermophilus (strain ATCC BAA-491 / LMD-9).